The following is a 605-amino-acid chain: Probable serine/threonine-protein kinase DDB_G0286481 (605 aa).

Residues 5 to 25 form a helical membrane-spanning segment; that stretch reads YQIFFLLYLLCILYVISCGYI. An N-linked (GlcNAc...) asparagine glycan is attached at asparagine 53. Composition is skewed to low complexity over residues 54–81 and 89–104; these read SSNNNNNNNNNNNNNNNNNNNNNNNNNN and NCNNNSSNNNSDNKSN. Residues 54–170 form a disordered region; sequence SSNNNNNNNN…LGGSMGSGSQ (117 aa). Asparagine 92, asparagine 93, asparagine 97, and asparagine 101 each carry an N-linked (GlcNAc...) asparagine glycan. Residues 105–123 show a composition bias toward basic residues; sequence IKNKQHHHHSNFRNRRGKS. A glycan (N-linked (GlcNAc...) asparagine) is linked at asparagine 127. Polar residues predominate over residues 144-155; it reads QSSSYDTSELHQ. N-linked (GlcNAc...) asparagine glycosylation occurs at asparagine 280. A Protein kinase domain is found at 312–597; the sequence is YEVIQKIGRG…AKEAMKHPYF (286 aa). ATP contacts are provided by residues 318–326 and lysine 341; that span reads IGRGKYSEV. An N-linked (GlcNAc...) asparagine glycan is attached at asparagine 390. Aspartate 429 acts as the Proton acceptor in catalysis. An N-linked (GlcNAc...) asparagine glycan is attached at asparagine 601.

It belongs to the protein kinase superfamily. CMGC Ser/Thr protein kinase family.

It is found in the membrane. The enzyme catalyses L-seryl-[protein] + ATP = O-phospho-L-seryl-[protein] + ADP + H(+). It catalyses the reaction L-threonyl-[protein] + ATP = O-phospho-L-threonyl-[protein] + ADP + H(+). This Dictyostelium discoideum (Social amoeba) protein is Probable serine/threonine-protein kinase DDB_G0286481.